Consider the following 154-residue polypeptide: NADPH-dependent 7-cyano-7-deazaguanine reductase (154 aa).

Positions 1–13 (MSVTDVSGLSQLG) are enriched in polar residues. The interval 1-30 (MSVTDVSGLSQLGTKVDTPESPEKAVLEKV) is disordered. The segment covering 17-27 (DTPESPEKAVL) has biased composition (basic and acidic residues). C52 acts as the Thioimide intermediate in catalysis. Residue D59 is the Proton donor of the active site. Residues 74-76 (VES) and 93-94 (HE) each bind substrate.

The protein belongs to the GTP cyclohydrolase I family. QueF type 1 subfamily.

The protein localises to the cytoplasm. It catalyses the reaction 7-aminomethyl-7-carbaguanine + 2 NADP(+) = 7-cyano-7-deazaguanine + 2 NADPH + 3 H(+). The protein operates within tRNA modification; tRNA-queuosine biosynthesis. Its function is as follows. Catalyzes the NADPH-dependent reduction of 7-cyano-7-deazaguanine (preQ0) to 7-aminomethyl-7-deazaguanine (preQ1). The protein is NADPH-dependent 7-cyano-7-deazaguanine reductase of Agrobacterium fabrum (strain C58 / ATCC 33970) (Agrobacterium tumefaciens (strain C58)).